Reading from the N-terminus, the 242-residue chain is Ribonuclease PH (242 aa).

Phosphate contacts are provided by residues Arg86 and 124–126; that span reads GTR.

This sequence belongs to the RNase PH family. Homohexameric ring arranged as a trimer of dimers.

The catalysed reaction is tRNA(n+1) + phosphate = tRNA(n) + a ribonucleoside 5'-diphosphate. Functionally, phosphorolytic 3'-5' exoribonuclease that plays an important role in tRNA 3'-end maturation. Removes nucleotide residues following the 3'-CCA terminus of tRNAs; can also add nucleotides to the ends of RNA molecules by using nucleoside diphosphates as substrates, but this may not be physiologically important. Probably plays a role in initiation of 16S rRNA degradation (leading to ribosome degradation) during starvation. This chain is Ribonuclease PH, found in Photorhabdus laumondii subsp. laumondii (strain DSM 15139 / CIP 105565 / TT01) (Photorhabdus luminescens subsp. laumondii).